A 69-amino-acid chain; its full sequence is MSKIKGNVKWFNESKGFGFITPEDGSKDVFVHFSAIQTNGFKTLAEGQRVEFEITNGAKGPSAANVIAL.

The CSD domain occupies 6–66; sequence GNVKWFNESK…GAKGPSAANV (61 aa).

Its subcellular location is the cytoplasm. This Escherichia coli O6:H1 (strain CFT073 / ATCC 700928 / UPEC) protein is Cold shock-like protein CspE (cspE).